The chain runs to 294 residues: Pyridoxal 5'-phosphate synthase subunit PdxS (294 aa).

D24 is a binding site for D-ribose 5-phosphate. The active-site Schiff-base intermediate with D-ribose 5-phosphate is the K81. G153 is a binding site for D-ribose 5-phosphate. R165 contributes to the D-glyceraldehyde 3-phosphate binding site. D-ribose 5-phosphate is bound by residues G214 and 235-236 (GS).

This sequence belongs to the PdxS/SNZ family. In terms of assembly, homohexamer and homododecamer. In the presence of PdxT, forms a dodecamer of heterodimers.

It carries out the reaction aldehydo-D-ribose 5-phosphate + D-glyceraldehyde 3-phosphate + L-glutamine = pyridoxal 5'-phosphate + L-glutamate + phosphate + 3 H2O + H(+). Its pathway is cofactor biosynthesis; pyridoxal 5'-phosphate biosynthesis. Catalyzes the formation of pyridoxal 5'-phosphate from ribose 5-phosphate (RBP), glyceraldehyde 3-phosphate (G3P) and ammonia. The ammonia is provided by the PdxT subunit. Can also use ribulose 5-phosphate and dihydroxyacetone phosphate as substrates, resulting from enzyme-catalyzed isomerization of RBP and G3P, respectively. The chain is Pyridoxal 5'-phosphate synthase subunit PdxS from Geobacillus kaustophilus (strain HTA426).